A 531-amino-acid chain; its full sequence is NADH-quinone oxidoreductase subunit N (531 aa).

The next 13 helical transmembrane spans lie at 13-33 (LAPI…EAFA), 45-65 (LALL…AEVI), 85-105 (PALA…LVIA), 150-170 (LFSV…TLFI), 200-220 (YFLL…LLYG), 242-262 (GLLV…VGAV), 289-309 (VAAF…MTWD), 310-330 (IQPF…VLAI), 339-359 (LAYS…AMSP), 365-385 (VFFY…LVAL), 415-435 (VATV…TSGF), 460-480 (ASAA…FTSP), and 496-516 (GFTA…GVWP).

It belongs to the complex I subunit 2 family. NDH-1 is composed of 14 different subunits. Subunits NuoA, H, J, K, L, M, N constitute the membrane sector of the complex.

The protein localises to the cell membrane. The catalysed reaction is a quinone + NADH + 5 H(+)(in) = a quinol + NAD(+) + 4 H(+)(out). Functionally, NDH-1 shuttles electrons from NADH, via FMN and iron-sulfur (Fe-S) centers, to quinones in the respiratory chain. The immediate electron acceptor for the enzyme in this species is believed to be a menaquinone. Couples the redox reaction to proton translocation (for every two electrons transferred, four hydrogen ions are translocated across the cytoplasmic membrane), and thus conserves the redox energy in a proton gradient. This Beutenbergia cavernae (strain ATCC BAA-8 / DSM 12333 / CCUG 43141 / JCM 11478 / NBRC 16432 / NCIMB 13614 / HKI 0122) protein is NADH-quinone oxidoreductase subunit N.